The following is a 2071-amino-acid chain: GTPase-activating protein BEM2 (2071 aa).

2 disordered regions span residues 1–115 (MPLK…QAHK) and 171–195 (AAPA…SERP). Low complexity-rich tracts occupy residues 16-31 (PQSC…QSSC) and 42-55 (SSIS…SKNN). Residues 62–80 (SNGSVYSDETTLKTAQTHY) are compositionally biased toward polar residues. Over residues 81-110 (TQQGQQAKPQQHTQQQQQQPQTPMQLQVPT) the composition is skewed to low complexity. The segment covering 181–191 (HQPTASLSSIG) has biased composition (polar residues). The Ras-GEF domain maps to 471-738 (DTEKVANQIH…MEMSLKMEPP (268 aa)). A compositionally biased stretch (polar residues) spans 787-811 (PSTKNNNSSQASNRISQLSVNSTPH). 3 disordered regions span residues 787 to 819 (PSTK…SSSA), 1645 to 1676 (RSVL…ARTS), and 1702 to 1738 (SVSS…GMGK). Composition is skewed to low complexity over residues 1656 to 1676 (SVSS…ARTS) and 1702 to 1726 (SVSS…ASPN). Positions 1751–1853 (SGFTSSSSQY…WMKAITLSKR (103 aa)) constitute a PH domain. Positions 1872–2070 (VPVEDVCERE…HLIRNPEHYF (199 aa)) constitute a Rho-GAP domain.

Functionally, GTPase-activating protein (GAP) for RHO proteins. Required for polarized growth and maintenance of cell polarity. The protein is GTPase-activating protein BEM2 (BEM2) of Eremothecium gossypii (strain ATCC 10895 / CBS 109.51 / FGSC 9923 / NRRL Y-1056) (Yeast).